We begin with the raw amino-acid sequence, 218 residues long: Octanoyltransferase (218 aa).

One can recognise a BPL/LPL catalytic domain in the interval 32–214 (ALTPDEIWLV…HFTQLLGYND (183 aa)). Residues 71–78 (RGGQITYH), 143–145 (SLG), and 156–158 (GLA) contribute to the substrate site. Cys174 acts as the Acyl-thioester intermediate in catalysis.

It belongs to the LipB family.

Its subcellular location is the cytoplasm. The enzyme catalyses octanoyl-[ACP] + L-lysyl-[protein] = N(6)-octanoyl-L-lysyl-[protein] + holo-[ACP] + H(+). The protein operates within protein modification; protein lipoylation via endogenous pathway; protein N(6)-(lipoyl)lysine from octanoyl-[acyl-carrier-protein]: step 1/2. Its function is as follows. Catalyzes the transfer of endogenously produced octanoic acid from octanoyl-acyl-carrier-protein onto the lipoyl domains of lipoate-dependent enzymes. Lipoyl-ACP can also act as a substrate although octanoyl-ACP is likely to be the physiological substrate. This chain is Octanoyltransferase, found in Histophilus somni (strain 129Pt) (Haemophilus somnus).